The primary structure comprises 199 residues: FMN-dependent NADH:quinone oxidoreductase (199 aa).

FMN is bound by residues 17-19 (SNS) and 87-90 (MYNF).

This sequence belongs to the azoreductase type 1 family. In terms of assembly, homodimer. Requires FMN as cofactor.

It catalyses the reaction 2 a quinone + NADH + H(+) = 2 a 1,4-benzosemiquinone + NAD(+). It carries out the reaction N,N-dimethyl-1,4-phenylenediamine + anthranilate + 2 NAD(+) = 2-(4-dimethylaminophenyl)diazenylbenzoate + 2 NADH + 2 H(+). Functionally, quinone reductase that provides resistance to thiol-specific stress caused by electrophilic quinones. Also exhibits azoreductase activity. Catalyzes the reductive cleavage of the azo bond in aromatic azo compounds to the corresponding amines. The polypeptide is FMN-dependent NADH:quinone oxidoreductase (Mycoplasma mycoides subsp. mycoides SC (strain CCUG 32753 / NCTC 10114 / PG1)).